A 1119-amino-acid chain; its full sequence is DNA-directed RNA polymerase subunit beta (1119 aa).

The protein belongs to the RNA polymerase beta chain family. The RNAP catalytic core consists of 2 alpha, 1 beta, 1 beta' and 1 omega subunit. When a sigma factor is associated with the core the holoenzyme is formed, which can initiate transcription.

It catalyses the reaction RNA(n) + a ribonucleoside 5'-triphosphate = RNA(n+1) + diphosphate. DNA-dependent RNA polymerase catalyzes the transcription of DNA into RNA using the four ribonucleoside triphosphates as substrates. The polypeptide is DNA-directed RNA polymerase subunit beta (Thermus aquaticus).